The primary structure comprises 397 residues: Digeranylgeranylglycerophospholipid reductase (397 aa).

11 residues coordinate FAD: Ala15, Glu34, Cys45, Gly46, Gly48, Arg101, Ala125, Glu163, Asp284, Gly296, and Ile297. Positions 339 and 375 each coordinate a 2,3-bis-O-(geranylgeranyl)-sn-glycerol 1-phospholipid.

Belongs to the geranylgeranyl reductase family. DGGGPL reductase subfamily. FAD is required as a cofactor.

The enzyme catalyses 2,3-bis-O-(phytanyl)-sn-glycerol 1-phosphate + 8 NADP(+) = 2,3-bis-O-(geranylgeranyl)-sn-glycerol 1-phosphate + 8 NADPH + 8 H(+). It catalyses the reaction 2,3-bis-O-(phytanyl)-sn-glycerol 1-phosphate + 8 NAD(+) = 2,3-bis-O-(geranylgeranyl)-sn-glycerol 1-phosphate + 8 NADH + 8 H(+). It carries out the reaction a 2,3-bis-O-phytanyl-sn-glycerol 1-phospholipid + 8 A = a 2,3-bis-O-(geranylgeranyl)-sn-glycerol 1-phospholipid + 8 AH2. The catalysed reaction is CDP-2,3-bis-O-(geranylgeranyl)-sn-glycerol + 8 AH2 = CDP-2,3-bis-O-(phytanyl)-sn-glycerol + 8 A. The enzyme catalyses archaetidylserine + 8 AH2 = 2,3-bis-O-phytanyl-sn-glycero-3-phospho-L-serine + 8 A. It functions in the pathway membrane lipid metabolism; glycerophospholipid metabolism. In terms of biological role, is involved in the reduction of 2,3-digeranylgeranylglycerophospholipids (unsaturated archaeols) into 2,3-diphytanylglycerophospholipids (saturated archaeols) in the biosynthesis of archaeal membrane lipids. Catalyzes the formation of archaetidic acid (2,3-di-O-phytanyl-sn-glyceryl phosphate) from 2,3-di-O-geranylgeranylglyceryl phosphate (DGGGP) via the hydrogenation of each double bond of the isoprenoid chains. Is also probably able to reduce double bonds of geranyl groups in CDP-2,3-bis-O-(geranylgeranyl)-sn-glycerol and archaetidylserine, thus acting at various stages in the biosynthesis of archaeal membrane lipids. The polypeptide is Digeranylgeranylglycerophospholipid reductase (Picrophilus torridus (strain ATCC 700027 / DSM 9790 / JCM 10055 / NBRC 100828 / KAW 2/3)).